Consider the following 300-residue polypeptide: Protoheme IX farnesyltransferase (300 aa).

Transmembrane regions (helical) follow at residues 24–44 (GLAI…IHEF), 46–66 (LETI…VGAS), 99–119 (AFTI…MINP), 122–142 (AMFG…LKTV), 145–165 (LSVF…WVAA), 176–196 (LFLI…WFLF), 220–240 (IVLY…GYTG), 244–264 (LTPV…VYAI), and 275–295 (AKTL…VYIL).

It belongs to the UbiA prenyltransferase family. Protoheme IX farnesyltransferase subfamily.

It is found in the cell inner membrane. The catalysed reaction is heme b + (2E,6E)-farnesyl diphosphate + H2O = Fe(II)-heme o + diphosphate. Its pathway is porphyrin-containing compound metabolism; heme O biosynthesis; heme O from protoheme: step 1/1. Functionally, converts heme B (protoheme IX) to heme O by substitution of the vinyl group on carbon 2 of heme B porphyrin ring with a hydroxyethyl farnesyl side group. The chain is Protoheme IX farnesyltransferase from Flavobacterium psychrophilum (strain ATCC 49511 / DSM 21280 / CIP 103535 / JIP02/86).